We begin with the raw amino-acid sequence, 677 residues long: Beta-galactosidase BgaA (677 aa).

A substrate-binding site is contributed by Arg112. Cys116 lines the Zn(2+) pocket. Asn150 contacts substrate. Residue Glu151 is the Proton donor of the active site. Zn(2+) contacts are provided by Cys156, Cys158, and Cys161. Glu309 serves as the catalytic Nucleophile. Residues Trp317 and 357 to 360 each bind substrate; that span reads EKYH.

It belongs to the glycosyl hydrolase 42 family. Dimer.

It catalyses the reaction Hydrolysis of terminal non-reducing beta-D-galactose residues in beta-D-galactosides.. No activity is lost during treatment with 20 or 100 mM EDTA in Z buffer for 3 hours at 0 degrees Celsius, nor is activity greatly stimulated by the addition of cations. Inhibited by 1 mM zinc and 1 mM copper, the levels of activity decrease to 10% of the untreated control. Nickel, cobalt and manganese at concentrations of 10 mM decrease enzyme activity to either 40% (for nickel and cobalt) or 60% (for manganese) of the activity in untreated controls. No change in enzyme activity in the presence of calcium and magnesium at concentrations up to 50 mM. EDTA-treated enzyme exhibits a slight increase in relative specific activity when it is assayed in the presence of 50 mM NaCl or 50 mM KCl, it does not exhibit enhanced activity at concentrations greater than 250 mM. Maintains between 20 and 40% of activity in the presence of 4 M NaCl or 4 M KCl, and it is more active in the presence of KCl than in the presence of NaCl. Retains 50% of activity in the presence of 3 M KCl or 2.5 M NaCl. Hydrolyzes o-nitrophenyl-beta-D-galactopyranoside (ONPG), p-nitrophenyl-beta-D-galactopyranoside (PNPG), 5-bromo-4-chloro-3-indoyl-beta-D-galactosde (X-gal), o-nitrophenyl-beta-D-fucopyranoside (ONPF) and p-nitrophenyl-beta-D-fucopyranoside (PNPF) with greatest activity towards ONPG and PNPG and low levels of activity with ONPF and PNPF. Detectable, but very low levels of activity towards p-nitrophenyl-beta-lactose (PNPL), p-nitrophenyl-beta-cellobiose (PNPC), p-nitrophenyl-alpha-galactopyranoside (PNP-alpha-G), and p-nitrophenyl-beta-xylopyranoside (PNPX). This chain is Beta-galactosidase BgaA, found in Planococcus sp. (strain 'SOS Orange').